A 61-amino-acid chain; its full sequence is Large ribosomal subunit protein uL30 (61 aa).

The protein belongs to the universal ribosomal protein uL30 family. Part of the 50S ribosomal subunit.

In Frankia alni (strain DSM 45986 / CECT 9034 / ACN14a), this protein is Large ribosomal subunit protein uL30.